Consider the following 261-residue polypeptide: Esterase citA (261 aa).

Residues S122, D207, and H235 each act as charge relay system in the active site.

It belongs to the LovG family.

The protein operates within mycotoxin biosynthesis. Functionally, non-reducing polyketide synthase; part of the gene cluster that mediates the biosynthesis of the mycotoxin citrinin, a hepato-nephrotoxic compound to humans due to inhibition of respiration complex III. The pathway begins with the synthesis of a keto-aldehyde intermediate by the citrinin PKS (pksCT also named citS) from successive condensations of 4 malonyl-CoA units, presumably with a simple acetyl-CoA starter unit. Release of the keto-aldehyde intermediate is consistent with the presence of the C-terminal reductive release domain. CitA collaborates with citS by catalyzing the hydrolysis of ACP-bound acyl intermediates to free the ACP from stalled intermediates. CitB then catalyzes the oxidation of the C-12 methyl of the ketone intermediate to an alcohol intermediate which is further oxidized by the oxidoreductase citC to produce a bisaldehyde intermediate. The fourth catalytic step is catalyzed by the citD aldehyde dehydrogenase. The final transformation is the reduction of C-3 by citE to provide the chemically stable citrinin nucleus. CitE appears highly selective for its substrate as its presence in any context other than a full complement of citS and citA-D does not result in observable new compounds. This Monascus ruber (Mold) protein is Esterase citA.